A 257-amino-acid chain; its full sequence is Adenylate kinase (257 aa).

51–56 is a binding site for ATP; the sequence is GAGKGT. The NMP stretch occupies residues 71-100; it reads ATGDMLRSQVAKKTELGKEAKKIMDQGGLV. Residues T72, R77, 98-100, 127-130, and Q134 contribute to the AMP site; these read GLV and GFPR. Residues 168–205 are LID; the sequence is GRLVHPASGRSYHKIFNPPKQEMKDDITGEPLIQRSDD. Residues R169 and 178-179 each bind ATP; that span reads SY. AMP-binding residues include R202 and R213. ATP is bound at residue Q241.

This sequence belongs to the adenylate kinase family. AK2 subfamily. As to quaternary structure, monomer.

Its subcellular location is the cytoplasm. It is found in the cytosol. The protein localises to the mitochondrion intermembrane space. It carries out the reaction AMP + ATP = 2 ADP. Catalyzes the reversible transfer of the terminal phosphate group between ATP and AMP. Plays an important role in cellular energy homeostasis and in adenine nucleotide metabolism. Adenylate kinase activity is critical for regulation of the phosphate utilization and the AMP de novo biosynthesis pathways. In Aspergillus terreus (strain NIH 2624 / FGSC A1156), this protein is Adenylate kinase (adk1).